A 423-amino-acid chain; its full sequence is NDP-N-acetyl-D-galactosaminuronic acid dehydrogenase (423 aa).

11-28 (TISVVGLGYIGLPTATVL) is a binding site for NAD(+). K218 acts as the Proton donor/acceptor in catalysis. C272 acts as the Nucleophile in catalysis.

Belongs to the UDP-glucose/GDP-mannose dehydrogenase family.

In terms of biological role, probably involved in synthesis of sugar components of EPS I, by converting NDP-N-acetyl-D-galactosamine into NDP-N-acetyl-D-galactosaminuronic acid. In Ralstonia solanacearum (Pseudomonas solanacearum), this protein is NDP-N-acetyl-D-galactosaminuronic acid dehydrogenase (epsD).